We begin with the raw amino-acid sequence, 982 residues long: Ubiquitin carboxyl-terminal hydrolase 15 (982 aa).

Residues 7-118 (VDLETQRSEV…SQQPIARKVV (112 aa)) enclose the DUSP domain. Residues 288–933 (CGLSNLGNTC…AAYVLFYQRQ (646 aa)) enclose the USP domain. Catalysis depends on Cys297, which acts as the Nucleophile. Positions 623–695 (TEENDGSLHC…DNDSENGLCT (73 aa)) are disordered. Positions 655 to 672 (METDEPDDESSQDQELPS) are enriched in acidic residues. The active-site Proton acceptor is His891. The tract at residues 950–982 (QGASAATGAPHESDEESNEDENDIENENCMHTN) is disordered. The span at 962-975 (SDEESNEDENDIEN) shows a compositional bias: acidic residues.

Belongs to the peptidase C19 family.

Its subcellular location is the cytoplasm. It is found in the nucleus. It carries out the reaction Thiol-dependent hydrolysis of ester, thioester, amide, peptide and isopeptide bonds formed by the C-terminal Gly of ubiquitin (a 76-residue protein attached to proteins as an intracellular targeting signal).. Its function is as follows. Hydrolase that removes conjugated ubiquitin from target proteins and regulates various pathways such as the TGF-beta receptor signaling and NF-kappa-B pathways. Acts as a key regulator of TGF-beta receptor signaling pathway, but the precise mechanism is still unclear: according to a report, acts by promoting deubiquitination of monoubiquitinated R-SMADs, thereby alleviating inhibition of R-SMADs and promoting activation of TGF-beta target genes. According to another reports, regulates the TGF-beta receptor signaling pathway by mediating deubiquitination and stabilization of tgfbr1, leading to an enhanced TGF-beta signal. May also regulate gene expression and/or DNA repair through the deubiquitination of histone H2B. Involved in endosome organization by mediating deubiquitination of rnf26 target(s), releasing vesicles that are restrained in the perinuclear region. In Xenopus tropicalis (Western clawed frog), this protein is Ubiquitin carboxyl-terminal hydrolase 15 (usp15).